A 259-amino-acid chain; its full sequence is 5'-nucleotidase SurE (259 aa).

Residues D8, D9, S40, and N95 each coordinate a divalent metal cation.

This sequence belongs to the SurE nucleotidase family. A divalent metal cation is required as a cofactor.

It localises to the cytoplasm. It catalyses the reaction a ribonucleoside 5'-phosphate + H2O = a ribonucleoside + phosphate. Nucleotidase that shows phosphatase activity on nucleoside 5'-monophosphates. The protein is 5'-nucleotidase SurE of Oleidesulfovibrio alaskensis (strain ATCC BAA-1058 / DSM 17464 / G20) (Desulfovibrio alaskensis).